A 219-amino-acid polypeptide reads, in one-letter code: Interleukin-12 subunit alpha (219 aa).

An N-terminal signal peptide occupies residues 1–22 (MCPARSLLLVATLVLLDYLSLA). Residues asparagine 24, asparagine 93, and asparagine 107 are each glycosylated (N-linked (GlcNAc...) asparagine). 3 disulfide bridges follow: cysteine 37–cysteine 110, cysteine 64–cysteine 196, and cysteine 85–cysteine 123.

The protein belongs to the IL-6 superfamily. In terms of assembly, heterodimer with IL12B; disulfide-linked. This heterodimer is known as interleukin IL-12. Heterodimer with EBI3/IL27B; not disulfide-linked. This heterodimer is known as interleukin IL-35. Interacts with NBR1; this interaction promotes IL-12 secretion.

The protein localises to the secreted. Functionally, heterodimerizes with IL12B to form the IL-12 cytokine or with EBI3/IL27B to form the IL-35 cytokine. IL-12 is primarily produced by professional antigen-presenting cells (APCs) such as B-cells and dendritic cells (DCs) as well as macrophages and granulocytes and regulates T-cell and natural killer-cell responses, induces the production of interferon-gamma (IFN-gamma), favors the differentiation of T-helper 1 (Th1) cells and is an important link between innate resistance and adaptive immunity. Mechanistically, exerts its biological effects through a receptor composed of IL12R1 and IL12R2 subunits. Binding to the receptor results in the rapid tyrosine phosphorylation of a number of cellular substrates including the JAK family kinases TYK2 and JAK2. In turn, recruited STAT4 gets phosphorylated and translocates to the nucleus where it regulates cytokine/growth factor responsive genes. As part of IL-35, plays essential roles in maintaining the immune homeostasis of the liver microenvironment and also functions as an immune-suppressive cytokine. Mediates biological events through unconventional receptors composed of IL12RB2 and gp130/IL6ST heterodimers or homodimers. Signaling requires the transcription factors STAT1 and STAT4, which form a unique heterodimer that binds to distinct DNA sites. This is Interleukin-12 subunit alpha (IL12A) from Macaca mulatta (Rhesus macaque).